The following is a 144-amino-acid chain: Large ribosomal subunit protein uL15 (144 aa).

The interval 1-58 (MKLNTLSPAAGAKHAAKRVGRGIGSGLGKTAGRGHKGQKSRSGGSIRPGFEGGQMPLK) is disordered. Residues 21 to 31 (RGIGSGLGKTA) are compositionally biased toward gly residues.

It belongs to the universal ribosomal protein uL15 family. In terms of assembly, part of the 50S ribosomal subunit.

Binds to the 23S rRNA. In Psychromonas ingrahamii (strain DSM 17664 / CCUG 51855 / 37), this protein is Large ribosomal subunit protein uL15.